Consider the following 474-residue polypeptide: PTS system N-acetylmuramic acid-specific EIIBC component (474 aa).

In terms of domain architecture, PTS EIIB type-1 spans 1-89 (MAKEISSELL…SELLGEAPVQ (89 aa)). At 1 to 123 (MAKEISSELL…LAKFATIFTP (123 aa)) the chain is on the cytoplasmic side. C29 functions as the Phosphocysteine intermediate; for EIIB activity in the catalytic mechanism. The region spanning 115–474 (AKFATIFTPL…LFGCRNVNLD (360 aa)) is the PTS EIIC type-1 domain. The helical transmembrane segment at 124–144 (LIPGFIAAGLLLGIATLIATV) threads the bilayer. At 145-157 (MHVPADAQGTLPD) the chain is on the periplasmic side. The helical transmembrane segment at 158-178 (ALNFMKVFSKGLFTFLVILVG) threads the bilayer. Over 179 to 180 (YN) the chain is Cytoplasmic. A helical transmembrane segment spans residues 181-201 (AAQAFGGTGVNGAIIAALFLL). Residues 202–217 (GYNPAATTGYYAGFHD) lie on the Periplasmic side of the membrane. The chain crosses the membrane as a helical span at residues 218 to 238 (FFGLPIDPRGNIIGVLIAAWA). Residues 239–260 (CARIEGMVRRFMPDDLDMLLTS) are Cytoplasmic-facing. A helical membrane pass occupies residues 261-281 (LITLLITATLAYLIIMPLGGW). Topologically, residues 282–301 (LFEGMSWLFMHLNSNPFGCA) are periplasmic. Residues 302–322 (VLAGLFLIAVVFGVHQGFIPV) form a helical membrane-spanning segment. Residues 323-334 (YLALMDSQGFNS) lie on the Cytoplasmic side of the membrane. The helical transmembrane segment at 335 to 355 (LFPILSMAGAGQVGAALALYW) threads the bilayer. Residues 356-368 (RAQPHSALRSQVR) are Periplasmic-facing. A helical transmembrane segment spans residues 369–389 (GAIIPGLLGVGEPLIYGVTLP). Residues 390–393 (RMKP) lie on the Cytoplasmic side of the membrane. Residues 394 to 414 (FVTACLGGAAGGLFIGLIAWW) traverse the membrane as a helical segment. At 415–440 (GLPMGLNSAFGPSGLVALPLMTSAQG) the chain is on the periplasmic side. The helical transmembrane segment at 441–461 (ILPAMAVYAGGILVAWVCGFI) threads the bilayer. Topologically, residues 462-474 (FTTLFGCRNVNLD) are cytoplasmic.

The protein resides in the cell inner membrane. It carries out the reaction N-acetyl-beta-D-muramate(out) + N(pros)-phospho-L-histidyl-[protein] = N-acetyl-beta-D-muramate 6-phosphate(in) + L-histidyl-[protein]. Its function is as follows. The phosphoenolpyruvate-dependent sugar phosphotransferase system (sugar PTS), a major carbohydrate active transport system, catalyzes the phosphorylation of incoming sugar substrates concomitantly with their translocation across the cell membrane. This system is involved in N-acetylmuramic acid (MurNAc) transport, yielding cytoplasmic MurNAc-6-P. Is responsible for growth on MurNAc as the sole source of carbon and energy. Is also able to take up anhydro-N-acetylmuramic acid (anhMurNAc), but cannot phosphorylate the carbon 6, probably because of the 1,6-anhydro ring. This Escherichia coli (strain K12) protein is PTS system N-acetylmuramic acid-specific EIIBC component (murP).